A 458-amino-acid polypeptide reads, in one-letter code: ATP synthase subunit beta (458 aa).

148–155 (GGAGVGKT) is a binding site for ATP.

It belongs to the ATPase alpha/beta chains family. In terms of assembly, F-type ATPases have 2 components, CF(1) - the catalytic core - and CF(0) - the membrane proton channel. CF(1) has five subunits: alpha(3), beta(3), gamma(1), delta(1), epsilon(1). CF(0) has three main subunits: a(1), b(2) and c(9-12). The alpha and beta chains form an alternating ring which encloses part of the gamma chain. CF(1) is attached to CF(0) by a central stalk formed by the gamma and epsilon chains, while a peripheral stalk is formed by the delta and b chains.

Its subcellular location is the cell inner membrane. It catalyses the reaction ATP + H2O + 4 H(+)(in) = ADP + phosphate + 5 H(+)(out). Its function is as follows. Produces ATP from ADP in the presence of a proton gradient across the membrane. The catalytic sites are hosted primarily by the beta subunits. The polypeptide is ATP synthase subunit beta (Mannheimia succiniciproducens (strain KCTC 0769BP / MBEL55E)).